The primary structure comprises 317 residues: Beta-ketoacyl-[acyl-carrier-protein] synthase III (317 aa).

Active-site residues include Cys112 and His244. Residues Gln245–Arg249 are ACP-binding. Residue Asn274 is part of the active site.

This sequence belongs to the thiolase-like superfamily. FabH family. In terms of assembly, homodimer.

The protein resides in the cytoplasm. It catalyses the reaction malonyl-[ACP] + acetyl-CoA + H(+) = 3-oxobutanoyl-[ACP] + CO2 + CoA. Its pathway is lipid metabolism; fatty acid biosynthesis. In terms of biological role, catalyzes the condensation reaction of fatty acid synthesis by the addition to an acyl acceptor of two carbons from malonyl-ACP. Catalyzes the first condensation reaction which initiates fatty acid synthesis and may therefore play a role in governing the total rate of fatty acid production. Possesses both acetoacetyl-ACP synthase and acetyl transacylase activities. Its substrate specificity determines the biosynthesis of branched-chain and/or straight-chain of fatty acids. This is Beta-ketoacyl-[acyl-carrier-protein] synthase III from Shigella dysenteriae serotype 1 (strain Sd197).